A 509-amino-acid chain; its full sequence is ATP synthase subunit alpha (509 aa).

Position 169 to 176 (169 to 176 (GDRQTGKT)) interacts with ATP.

The protein belongs to the ATPase alpha/beta chains family. As to quaternary structure, F-type ATPases have 2 components, CF(1) - the catalytic core - and CF(0) - the membrane proton channel. CF(1) has five subunits: alpha(3), beta(3), gamma(1), delta(1), epsilon(1). CF(0) has three main subunits: a(1), b(2) and c(9-12). The alpha and beta chains form an alternating ring which encloses part of the gamma chain. CF(1) is attached to CF(0) by a central stalk formed by the gamma and epsilon chains, while a peripheral stalk is formed by the delta and b chains.

It is found in the cell inner membrane. It catalyses the reaction ATP + H2O + 4 H(+)(in) = ADP + phosphate + 5 H(+)(out). Its function is as follows. Produces ATP from ADP in the presence of a proton gradient across the membrane. The alpha chain is a regulatory subunit. In Brucella ovis (strain ATCC 25840 / 63/290 / NCTC 10512), this protein is ATP synthase subunit alpha.